The following is a 101-amino-acid chain: uncharacterized protein (101 aa).

This is an uncharacterized protein from Escherichia coli (strain K12).